The following is a 524-amino-acid chain: Probable endopeptidase p60 (524 aa).

Positions 1-27 (MNMKKATIAATAGIAVTAFAAPTIASA) are cleaved as a signal peptide. The LysM 1 domain maps to 28 to 71 (STVVVEAGDTLWGIAQSKGTTVDALKKANNLTSDKIVPGQKLQV). Positions 78-142 (KTEKSVSATW…VNGKYLGDAV (65 aa)) constitute an SH3b domain. The disordered stretch occupies residues 150 to 188 (QEVKQETTKQTAPAAETKTEVKQSTPAPTAPKAAETKTA). The segment covering 174–188 (TPAPTAPKAAETKTA) has biased composition (low complexity). The LysM 2 domain maps to 196 to 239 (TTHTVKSGDTIWALSVKYGASVQDLMSWNNLSSSSIYVGQKIAV). Residues 272–299 (NTNTTVKKEVTTQTQTNTTKAPAQAAKP) show a composition bias toward low complexity. Positions 272–313 (NTNTTVKKEVTTQTQTNTTKAPAQAAKPAPAPAPAPTVNTNA) are disordered. The 44-residue stretch at 314-357 (STYTVKSGDSLSKIANTFGTSVSKIKALNNLTSDNLQVGTVLKV) folds into the LysM 3 domain. A disordered region spans residues 360-408 (TVPTTNTNNNSNTTAPTTNTSNNNTSSNTSTPSKNTNTNTNQGSSNSAS). Residues 362–408 (PTTNTNNNSNTTAPTTNTSNNNTSSNTSTPSKNTNTNTNQGSSNSAS) show a composition bias toward low complexity. The region spanning 406-524 (SASASALIAE…GKYLVGFGRV (119 aa)) is the NlpC/P60 domain. Cys-436 acts as the Nucleophile in catalysis. The active-site Proton acceptor is His-486. Asn-498 is an active-site residue.

The protein belongs to the peptidase C40 family.

Functionally, this major extracellular protein may be involved in the invasion of non-professional phagocytic cells by Listeria. In Listeria welshimeri, this protein is Probable endopeptidase p60 (iap).